Here is a 69-residue protein sequence, read N- to C-terminus: Cell division protein ZapB (69 aa).

Positions 6 to 68 (LEQLEARVQS…LGKMDQMNSE (63 aa)) form a coiled coil.

Belongs to the ZapB family. Homodimer. The ends of the coiled-coil dimer bind to each other, forming polymers. Interacts with FtsZ.

It is found in the cytoplasm. In terms of biological role, non-essential, abundant cell division factor that is required for proper Z-ring formation. It is recruited early to the divisome by direct interaction with FtsZ, stimulating Z-ring assembly and thereby promoting cell division earlier in the cell cycle. Its recruitment to the Z-ring requires functional FtsA or ZipA. In Tolumonas auensis (strain DSM 9187 / NBRC 110442 / TA 4), this protein is Cell division protein ZapB.